Consider the following 699-residue polypeptide: DNA ligase (699 aa).

NAD(+) is bound by residues 47-51 (DAQYD), 96-97 (SL), and Glu128. The N6-AMP-lysine intermediate role is filled by Lys130. Residues Arg151, Glu186, Lys303, and Lys327 each coordinate NAD(+). 4 residues coordinate Zn(2+): Cys422, Cys425, Cys440, and Cys446. The BRCT domain occupies 620–699 (GDNLLLSNQT…EEWIKMVNEL (80 aa)).

The protein belongs to the NAD-dependent DNA ligase family. LigA subfamily. The cofactor is Mg(2+). Mn(2+) is required as a cofactor.

It carries out the reaction NAD(+) + (deoxyribonucleotide)n-3'-hydroxyl + 5'-phospho-(deoxyribonucleotide)m = (deoxyribonucleotide)n+m + AMP + beta-nicotinamide D-nucleotide.. DNA ligase that catalyzes the formation of phosphodiester linkages between 5'-phosphoryl and 3'-hydroxyl groups in double-stranded DNA using NAD as a coenzyme and as the energy source for the reaction. It is essential for DNA replication and repair of damaged DNA. The protein is DNA ligase of Orientia tsutsugamushi (strain Ikeda) (Rickettsia tsutsugamushi).